The following is a 415-amino-acid chain: BTB/POZ and MATH domain-containing protein 6 (415 aa).

The disordered stretch occupies residues 1 to 33 (MSKLMTRTSGSSSPNTIPDQIESPTSSRSVTQT). The 135-residue stretch at 35-169 (NGSHQFVIQG…DDCLKINCTV (135 aa)) folds into the MATH domain. A BTB domain is found at 205-271 (SDVTFDVAGE…MYKDSLPGDV (67 aa)). A disordered region spans residues 385 to 415 (SSSGGGKSQSVWAQLSNGGETSSRRVRQRTT). Residues 392–405 (SQSVWAQLSNGGET) show a composition bias toward polar residues.

The protein belongs to the Tdpoz family. In terms of assembly, heterodimer with BPM1. Interacts with RAP2-4. Interacts with CUL3A. Binds to MYB56 at the promoter of FLOWERING LOCUS T (FT). As to expression, ubiquitous.

It is found in the nucleus. It localises to the cytoplasm. The protein operates within protein modification; protein ubiquitination. May act as a substrate-specific adapter of an E3 ubiquitin-protein ligase complex (CUL3-RBX1-BTB) which mediates the ubiquitination and subsequent proteasomal degradation of target proteins. This chain is BTB/POZ and MATH domain-containing protein 6 (BPM6), found in Arabidopsis thaliana (Mouse-ear cress).